The primary structure comprises 221 residues: MSDPAVETAPVAVASPGKAKKEKKPKSDKPKKPKAPRTHPPVSEMVFNAVKTLKERGGSSLQAIKKFLIAQYKVDVDKLDTFIKKYLKSAVEKGQLLQTKGKGALGSFKLPAAAKKEKVVKKTEKKPKKAAAKPSKAGEKKVKKTIAKKPKAATATKIKKPVAKTTKKPAAAKPAAKKAAPKPKAAPKPKAAPKPKKAAAPKAKKPAAKPKAAKKPAAKKA.

2 disordered regions span residues 1-43 (MSDP…PPVS) and 113-221 (AAKK…AKKA). The H15 domain occupies 38 to 112 (THPPVSEMVF…GALGSFKLPA (75 aa)). 2 stretches are compositionally biased toward basic residues: residues 141-167 (KVKKTIAKKPKAATATKIKKPVAKTTK) and 175-221 (AAKK…AKKA).

Belongs to the histone H1/H5 family.

The protein resides in the nucleus. It localises to the chromosome. Its function is as follows. Histones H1 are necessary for the condensation of nucleosome chains into higher-order structures. The sequence is that of Histone H1C from Chironomus tentans (Midge).